The following is a 118-amino-acid chain: Transcription factor PAR1 (118 aa).

The disordered stretch occupies residues 1-58; sequence MEETLATPDATRRSLSPSCSATVKSRAAGFERRTKRRLSETNASVREDREEAEEEEDE. The segment covering 13-23 has biased composition (polar residues); the sequence is RSLSPSCSATV. The bHLH domain maps to 43–92; the sequence is ASVREDREEAEEEEDEVKEKIEALQRIIPGGAALGVDALFEETAGYILSL.

Belongs to the bHLH protein family. As to quaternary structure, homodimer.

The protein localises to the nucleus. Atypical bHLH transcription factor that acts as a negative regulator of a variety of shade avoidance syndrome (SAS) responses, including seedling elongation and photosynthetic pigment accumulation. Acts as a direct transcriptional repressor of two auxin-responsive genes, SAUR15 and SAUR68. May function in integrating shade and hormone transcriptional networks in response to light and auxin changes. The protein is Transcription factor PAR1 (PAR1) of Arabidopsis thaliana (Mouse-ear cress).